Here is a 161-residue protein sequence, read N- to C-terminus: Small ribosomal subunit protein uS19 (161 aa).

Residues 1–19 (MARQKKYSGKGGARKKNKQ) are compositionally biased toward basic residues. The interval 1-26 (MARQKKYSGKGGARKKNKQKQSVAPR) is disordered.

This sequence belongs to the universal ribosomal protein uS19 family.

Its function is as follows. Protein S19 forms a complex with S13 that binds strongly to the 16S ribosomal RNA. The sequence is that of Small ribosomal subunit protein uS19 from Methanococcus maripaludis (strain C7 / ATCC BAA-1331).